The following is a 167-amino-acid chain: Small ribosomal subunit protein uS5 (167 aa).

The S5 DRBM domain occupies 12-75 (LEERVVTINR…EDAKKNMVFV (64 aa)).

Belongs to the universal ribosomal protein uS5 family. As to quaternary structure, part of the 30S ribosomal subunit. Contacts proteins S4 and S8.

With S4 and S12 plays an important role in translational accuracy. Functionally, located at the back of the 30S subunit body where it stabilizes the conformation of the head with respect to the body. This is Small ribosomal subunit protein uS5 from Listeria innocua serovar 6a (strain ATCC BAA-680 / CLIP 11262).